The chain runs to 366 residues: Histidinol-phosphate aminotransferase (366 aa).

K228 carries the N6-(pyridoxal phosphate)lysine modification.

Belongs to the class-II pyridoxal-phosphate-dependent aminotransferase family. Histidinol-phosphate aminotransferase subfamily. In terms of assembly, homodimer. Pyridoxal 5'-phosphate serves as cofactor.

The enzyme catalyses L-histidinol phosphate + 2-oxoglutarate = 3-(imidazol-4-yl)-2-oxopropyl phosphate + L-glutamate. Its pathway is amino-acid biosynthesis; L-histidine biosynthesis; L-histidine from 5-phospho-alpha-D-ribose 1-diphosphate: step 7/9. The protein is Histidinol-phosphate aminotransferase of Campylobacter fetus subsp. fetus (strain 82-40).